A 604-amino-acid chain; its full sequence is Netrin-1 (604 aa).

An N-terminal signal peptide occupies residues 1-24 (MMRAVWEALAALAAVACLVGAVRG). Positions 47 to 284 (HPRRCIPDFV…AVSDLQVGGR (238 aa)) constitute a Laminin N-terminal domain. 3 N-linked (GlcNAc...) asparagine glycosylation sites follow: asparagine 95, asparagine 116, and asparagine 131. Disulfide bonds link cysteine 119–cysteine 152, cysteine 285–cysteine 294, cysteine 287–cysteine 304, cysteine 306–cysteine 315, cysteine 318–cysteine 338, cysteine 341–cysteine 350, cysteine 343–cysteine 368, cysteine 371–cysteine 380, cysteine 383–cysteine 401, cysteine 404–cysteine 416, cysteine 406–cysteine 423, cysteine 425–cysteine 434, cysteine 437–cysteine 451, cysteine 472–residue 544, and cysteine 491–cysteine 601. Laminin EGF-like domains lie at 285 to 340 (CKCN…ECVA), 341 to 403 (CNCN…ACKA), and 404 to 453 (CDCH…PCIK). N-linked (GlcNAc...) asparagine glycosylation occurs at asparagine 417. The NTR domain maps to 472–601 (CDSYCKASKG…FQQREKKGKC (130 aa)). A Cell attachment site motif is present at residues 530-532 (RGD).

As to quaternary structure, binds to its receptors; DCC, UNC5A, UNC5B, UNC5C and probably UNC5D. Binds to its receptor; DSCAM. Interacts with APP.

It is found in the secreted. The protein resides in the cytoplasm. Functionally, netrins control guidance of CNS commissural axons and peripheral motor axons. Its association with either DCC or some UNC5 receptors will lead to axon attraction or repulsion, respectively. Binding to UNC5C might cause dissociation of UNC5C from polymerized TUBB3 in microtubules and thereby lead to increased microtubule dynamics and axon repulsion. Involved in dorsal root ganglion axon projection towards the spinal cord. It also serves as a survival factor via its association with its receptors which prevent the initiation of apoptosis. Involved in colorectal tumorigenesis by regulating apoptosis. In Rattus norvegicus (Rat), this protein is Netrin-1 (Ntn1).